The chain runs to 102 residues: Outer membrane protein assembly factor BamE (102 aa).

The N-terminal stretch at 1–20 (MNNYIKALLIIICFSSCSIS) is a signal peptide.

The protein belongs to the BamE family. As to quaternary structure, part of the Bam complex.

It localises to the cell outer membrane. Part of the outer membrane protein assembly complex, which is involved in assembly and insertion of beta-barrel proteins into the outer membrane. This is Outer membrane protein assembly factor BamE from Buchnera aphidicola subsp. Acyrthosiphon pisum (strain APS) (Acyrthosiphon pisum symbiotic bacterium).